The chain runs to 332 residues: UDP-galactose/UDP-glucose transporter 1 (332 aa).

Helical transmembrane passes span I11 to L31, H49 to I69, A80 to I100, V112 to I132, T135 to L155, I206 to P226, I252 to A272, and W301 to L317. A Di-lysine motif motif is present at residues K327–S332.

It belongs to the nucleotide-sugar transporter family. UDP-galactose:UMP antiporter (TC 2.A.7.11) subfamily.

Its subcellular location is the endoplasmic reticulum membrane. Functionally, essential sugar transporter required for the transport of UDP-galactose and UDP-glucose from the cytoplasm into the Golgi and the endoplasmic reticulum, to ensure quality control of protein folding. Essential for pollen development and involved in embryo sac progress. This chain is UDP-galactose/UDP-glucose transporter 1, found in Arabidopsis thaliana (Mouse-ear cress).